Here is a 146-residue protein sequence, read N- to C-terminus: Hemoglobin subunit beta (146 aa).

Val1 bears the N-acetylvaline mark. The Globin domain maps to 2–146 (HLTGEEKSTV…VATALAHKYH (145 aa)). Ser44 is subject to Phosphoserine. N6-acetyllysine is present on Lys59. His63 contacts heme b. Lys82 carries the post-translational modification N6-acetyllysine. His92 is a heme b binding site. Cys93 carries the post-translational modification S-nitrosocysteine. N6-acetyllysine is present on Lys144.

Belongs to the globin family. In terms of assembly, heterotetramer of two alpha chains and two beta chains. In terms of tissue distribution, red blood cells.

In terms of biological role, involved in oxygen transport from the lung to the various peripheral tissues. The protein is Hemoglobin subunit beta (HBB) of Macrotus californicus (Californian leaf-nosed bat).